Consider the following 741-residue polypeptide: Copper-transporting ATPase (741 aa).

In terms of domain architecture, HMA spans M1 to K67. Residues M1 to K83 lie on the Cytoplasmic side of the membrane. Cu cation-binding residues include C12 and C15. Residues L84–S104 form a helical membrane-spanning segment. Residues P105–A124 are Extracellular-facing. The chain crosses the membrane as a helical span at residues C125 to Q144. Over G145–H151 the chain is Cytoplasmic. The helical transmembrane segment at R152–L172 threads the bilayer. Residues W173–F190 are Extracellular-facing. The helical transmembrane segment at E191–K211 threads the bilayer. At D212 to K339 the chain is on the cytoplasmic side. The chain crosses the membrane as a helical span at residues V340–I362. At A363–A375 the chain is on the extracellular side. The chain crosses the membrane as a helical span at residues L376–L393. Topologically, residues A394–I681 are cytoplasmic. D431 (4-aspartylphosphate intermediate) is an active-site residue. 2 residues coordinate Mg(2+): D627 and D631. A helical transmembrane segment spans residues K682–G701. The Extracellular portion of the chain corresponds to V702–P712. The helical transmembrane segment at A713–Q731 threads the bilayer. Over R732–H741 the chain is Cytoplasmic.

The protein belongs to the cation transport ATPase (P-type) (TC 3.A.3) family. Type IB subfamily.

The protein localises to the cell membrane. It carries out the reaction Cu(2+)(in) + ATP + H2O = Cu(2+)(out) + ADP + phosphate + H(+). Functionally, probably involved in copper export. The sequence is that of Copper-transporting ATPase (copA) from Helicobacter pylori (Campylobacter pylori).